The sequence spans 462 residues: Chitinase-like mite allergen Der p 18.0101 (462 aa).

The N-terminal stretch at 1 to 25 (MTRLSFTVLIFLAAYFGSNIRPNVA) is a signal peptide. In terms of domain architecture, GH18 spans 29 to 378 (PKTVCYYESW…HAINSNYFRG (350 aa)). Cysteines 33 and 58 form a disulfide. N338 and N441 each carry an N-linked (GlcNAc...) asparagine glycan. Residues 404 to 462 (VFHCHQEGFFRDKTYCAKYYECKKGDFGLEQTVHHCPNHSQAFDEVSRTCVDHAKIPGC) form the Chitin-binding type-2 domain. A disulfide bridge links C439 with C453.

It belongs to the glycosyl hydrolase 18 family. Chitinase class II subfamily. As to expression, expressed in the peritrophic matrix of the midgut, and only very weakly in fecal pellets.

The protein localises to the secreted. Its function is as follows. Probably a non-catalytic chitinase-like protein, which binds to insoluble chitin and enhances the activity of the catalytic chitinases. Has weak chitin-binding activity. In Dermatophagoides pteronyssinus (European house dust mite), this protein is Chitinase-like mite allergen Der p 18.0101.